We begin with the raw amino-acid sequence, 141 residues long: Cystatin (141 aa).

An N-terminal signal peptide occupies residues 1-26 (MLHSQLPVAAPLRLLCALLLLPSVTM). Positions 29–129 (GGLSPRSVTD…CRFQVWSRPW (101 aa)) constitute a Cystatin domain. The Secondary area of contact motif lies at 73–77 (QVVTG). 2 cysteine pairs are disulfide-bonded: Cys91–Cys107 and Cys120–Cys140.

This sequence belongs to the cystatin family. In terms of tissue distribution, expressed at a low level by the venom gland (at protein level).

The protein localises to the secreted. Its function is as follows. Inhibits various C1 cysteine proteases including cathepsin L, papain and cathepsin B. This protein has no toxic activity and its function in the venom is unknown. It may play a role as a housekeeping or regulatory protein. The polypeptide is Cystatin (Hoplocephalus stephensii (Stephens's banded snake)).